The chain runs to 125 residues: Small ribosomal subunit protein uS12 (125 aa).

3-methylthioaspartic acid is present on D89.

The protein belongs to the universal ribosomal protein uS12 family. Part of the 30S ribosomal subunit. Contacts proteins S8 and S17. May interact with IF1 in the 30S initiation complex.

With S4 and S5 plays an important role in translational accuracy. In terms of biological role, interacts with and stabilizes bases of the 16S rRNA that are involved in tRNA selection in the A site and with the mRNA backbone. Located at the interface of the 30S and 50S subunits, it traverses the body of the 30S subunit contacting proteins on the other side and probably holding the rRNA structure together. The combined cluster of proteins S8, S12 and S17 appears to hold together the shoulder and platform of the 30S subunit. This is Small ribosomal subunit protein uS12 from Clostridium acetobutylicum (strain ATCC 824 / DSM 792 / JCM 1419 / IAM 19013 / LMG 5710 / NBRC 13948 / NRRL B-527 / VKM B-1787 / 2291 / W).